We begin with the raw amino-acid sequence, 1432 residues long: ABC transporter asL7 (1432 aa).

Polar residues predominate over residues 1–20 (MFDTTKLQSSTQDGSTSSVT). A disordered region spans residues 1 to 36 (MFDTTKLQSSTQDGSTSSVTGEPIFGANDPNSELNP). The 251-residue stretch at 91–341 (LALPGMLIRN…FERLGFECPS (251 aa)) folds into the ABC transporter 1 domain. The N-linked (GlcNAc...) asparagine glycan is linked to N265. Helical transmembrane passes span 450–470 (PTIVVTMGNFVLALIMSSLFF), 484–504 (VVLFMAVMFNAFASVLEVMTL), 530–550 (VLMDLPIKVLACVSFNLVFYF), 559–579 (GNFFFYLLASFFIVLSMSGIF), 597–617 (MIPASILMVFLITFAGFMVPI), and 702–722 (IGIVIAMTIFNYTMCFITSEY). The 244-residue stretch at 786–1029 (FHWRNVCYDI…TLVEYFERKA (244 aa)) folds into the ABC transporter 2 domain. Position 822–829 (822–829 (GVSGAGKT)) interacts with ATP. N1017 carries an N-linked (GlcNAc...) asparagine glycan. A disordered region spans residues 1076 to 1095 (LSRLREHGSQSNSHDSEKSE). 6 consecutive transmembrane segments (helical) span residues 1135 to 1155 (FALCGVVSLFIGLVFLNSPLS), 1166 to 1186 (VFQLFAIVGQLVSQQMPQFII), 1215 to 1235 (IPYYALASVMMWALWYFPIGL), 1251 to 1271 (LMWLLFLAWLMWVSTFGHFCI), 1279 to 1299 (AGANAANFMYVLVNFFCGALI), and 1317 to 1337 (LSYLVSSMLSAGIANVEVTCA). The N-linked (GlcNAc...) asparagine glycan is linked to N1371. Residues 1402–1422 (FGIIWVYVIFNISAAITLYWV) form a helical membrane-spanning segment.

This sequence belongs to the ABC transporter superfamily. ABCG family. PDR (TC 3.A.1.205) subfamily.

Its subcellular location is the cell membrane. ABC transporter; part of the gene cluster that mediates the biosynthesis of xenovulene A, an unusual meroterpenoid that has potent inhibitory effects on the human gamma-aminobutyrate A (GABAA) benzodiazepine receptor. The sequence is that of ABC transporter asL7 from Sarocladium schorii (Acremonium strictum (strain IMI 501407)).